The sequence spans 141 residues: Large ribosomal subunit protein uL11 (141 aa).

It belongs to the universal ribosomal protein uL11 family. As to quaternary structure, part of the ribosomal stalk of the 50S ribosomal subunit. Interacts with L10 and the large rRNA to form the base of the stalk. L10 forms an elongated spine to which L12 dimers bind in a sequential fashion forming a multimeric L10(L12)X complex. One or more lysine residues are methylated.

Its function is as follows. Forms part of the ribosomal stalk which helps the ribosome interact with GTP-bound translation factors. The chain is Large ribosomal subunit protein uL11 from Oceanobacillus iheyensis (strain DSM 14371 / CIP 107618 / JCM 11309 / KCTC 3954 / HTE831).